Consider the following 443-residue polypeptide: Xaa-Pro dipeptidase (443 aa).

Mn(2+) contacts are provided by Asp246, Asp257, His339, Glu384, and Glu423.

The protein belongs to the peptidase M24B family. Bacterial-type prolidase subfamily. Requires Mn(2+) as cofactor.

The catalysed reaction is Xaa-L-Pro dipeptide + H2O = an L-alpha-amino acid + L-proline. Splits dipeptides with a prolyl residue in the C-terminal position. The polypeptide is Xaa-Pro dipeptidase (Salmonella paratyphi B (strain ATCC BAA-1250 / SPB7)).